The chain runs to 199 residues: Protein GrpE (199 aa).

Positions 1-10 (MTNQTEKEQV) are enriched in basic and acidic residues. Positions 1-44 (MTNQTEKEQVEQDVSQATELAQEAQEAQTQDVEPELQQNNEIDP) are disordered. Low complexity predominate over residues 16-30 (QATELAQEAQEAQTQ).

The protein belongs to the GrpE family. Homodimer.

It is found in the cytoplasm. Participates actively in the response to hyperosmotic and heat shock by preventing the aggregation of stress-denatured proteins, in association with DnaK and GrpE. It is the nucleotide exchange factor for DnaK and may function as a thermosensor. Unfolded proteins bind initially to DnaJ; upon interaction with the DnaJ-bound protein, DnaK hydrolyzes its bound ATP, resulting in the formation of a stable complex. GrpE releases ADP from DnaK; ATP binding to DnaK triggers the release of the substrate protein, thus completing the reaction cycle. Several rounds of ATP-dependent interactions between DnaJ, DnaK and GrpE are required for fully efficient folding. This is Protein GrpE from Glaesserella parasuis serovar 5 (strain SH0165) (Haemophilus parasuis).